Here is an 89-residue protein sequence, read N- to C-terminus: Small cysteine-rich protein 1 (89 aa).

An N-terminal signal peptide occupies residues 1–20 (MDVRFRLCLFLVILVIVANA). Residues 21–27 (NVIKEPE) constitute a propeptide that is removed on maturation.

This sequence belongs to the Cnidaria small cysteine-rich protein (SCRiP) family. gamma subfamily. In terms of processing, contains 4 disulfide bonds.

Its subcellular location is the secreted. It is found in the nematocyst. Functionally, induces neurotoxic symptoms on zebrafish. Has also been claimed to be implied in calcification, but tests on homolog proteins suggest that proteins of this family have a neurotoxic function and not a calcification function. This Acropora millepora (Staghorn coral) protein is Small cysteine-rich protein 1.